The chain runs to 1088 residues: V-type proton ATPase catalytic subunit A (1088 aa).

Residue 257–264 coordinates ATP; sequence GAFGCGKT. In terms of domain architecture, DOD-type homing endonuclease spans 485-662; sequence LLGTWAGIGN…LVKIAHSLGI (178 aa).

Belongs to the ATPase alpha/beta chains family. V-ATPase is a heteromultimeric enzyme composed of a peripheral catalytic V1 complex (components A to H) attached to an integral membrane V0 proton pore complex (components: a, c, c', c'', d, e, f and VOA1). In terms of processing, this protein undergoes a protein self splicing that involves a post-translational excision of the VDE intervening region (intein) followed by peptide ligation.

It is found in the vacuole membrane. The catalysed reaction is ATP + H2O + 4 H(+)(in) = ADP + phosphate + 5 H(+)(out). In terms of biological role, catalytic subunit of the V1 complex of vacuolar(H+)-ATPase (V-ATPase), a multisubunit enzyme composed of a peripheral complex (V1) that hydrolyzes ATP and a membrane integral complex (V0) that translocates protons. V-ATPase is responsible for acidifying and maintaining the pH of intracellular compartments. Functionally, VDE is an endonuclease that can cleave at a site present in a VMA1 allele that lacks the derived endonuclease segment of the open reading frame; cleavage at this site only occurs during meiosis and initiates 'homing', a genetic event that converts a VMA1 allele lacking VDE into one that contains it. This Candida tropicalis (Yeast) protein is V-type proton ATPase catalytic subunit A (VMA1).